We begin with the raw amino-acid sequence, 347 residues long: NADH-ubiquinone oxidoreductase chain 2 (347 aa).

11 consecutive transmembrane segments (helical) span residues 1–21 (MNPL…LITA), 25–45 (HWFL…PVLT), 55–75 (AAIK…MAIL), 96–116 (TMML…FWVP), 123–143 (TLMS…SIMY), 145–165 (IFPV…IMVG), 178–198 (ILAY…PYNP), 200–220 (ITIF…LALN), 237–257 (LTWL…LPPL), 274–294 (GTLI…YFYM), and 324–344 (FLLP…PLTF).

The protein belongs to the complex I subunit 2 family. In terms of assembly, core subunit of respiratory chain NADH dehydrogenase (Complex I) which is composed of 45 different subunits. Interacts with TMEM242.

Its subcellular location is the mitochondrion inner membrane. It catalyses the reaction a ubiquinone + NADH + 5 H(+)(in) = a ubiquinol + NAD(+) + 4 H(+)(out). In terms of biological role, core subunit of the mitochondrial membrane respiratory chain NADH dehydrogenase (Complex I) which catalyzes electron transfer from NADH through the respiratory chain, using ubiquinone as an electron acceptor. Essential for the catalytic activity and assembly of complex I. The polypeptide is NADH-ubiquinone oxidoreductase chain 2 (Hylobates lar (Lar gibbon)).